The following is an 81-amino-acid chain: Photosystem I iron-sulfur center (81 aa).

2 consecutive 4Fe-4S ferredoxin-type domains span residues 2-31 and 39-68; these read AHSV…MVPW and IASA…VRVY. The [4Fe-4S] cluster site is built by Cys-11, Cys-14, Cys-17, Cys-21, Cys-48, Cys-51, Cys-54, and Cys-58.

As to quaternary structure, the eukaryotic PSI reaction center is composed of at least 11 subunits. Requires [4Fe-4S] cluster as cofactor.

It localises to the plastid. It is found in the chloroplast thylakoid membrane. The catalysed reaction is reduced [plastocyanin] + hnu + oxidized [2Fe-2S]-[ferredoxin] = oxidized [plastocyanin] + reduced [2Fe-2S]-[ferredoxin]. Its function is as follows. Apoprotein for the two 4Fe-4S centers FA and FB of photosystem I (PSI); essential for photochemical activity. FB is the terminal electron acceptor of PSI, donating electrons to ferredoxin. The C-terminus interacts with PsaA/B/D and helps assemble the protein into the PSI complex. Required for binding of PsaD and PsaE to PSI. PSI is a plastocyanin-ferredoxin oxidoreductase, converting photonic excitation into a charge separation, which transfers an electron from the donor P700 chlorophyll pair to the spectroscopically characterized acceptors A0, A1, FX, FA and FB in turn. This chain is Photosystem I iron-sulfur center, found in Gnetum gnemon (Spanish joint-fir).